Reading from the N-terminus, the 31-residue chain is Hemocyanin subunit 1 (31 aa).

Belongs to the tyrosinase family. Hemocyanin subfamily. In terms of tissue distribution, hemolymph.

The protein resides in the secreted. The protein localises to the extracellular space. Hemocyanins are copper-containing oxygen carriers occurring freely dissolved in the hemolymph of many mollusks and arthropods. This is Hemocyanin subunit 1 from Homarus americanus (American lobster).